A 493-amino-acid chain; its full sequence is Ketol-acid reductoisomerase (NADP(+)) (493 aa).

The KARI N-terminal Rossmann domain maps to 17 to 208 (LGKCRFMKRE…GGDRAGVLES (192 aa)). Residues 45 to 48 (CGAQ), arginine 68, arginine 76, serine 78, and 108 to 110 (DKQ) contribute to the NADP(+) site. The active site involves histidine 132. NADP(+) is bound at residue glycine 158. 2 KARI C-terminal knotted domains span residues 209-353 (SFIA…SEQE) and 354-486 (YYDK…MTDM). Residues aspartate 217, glutamate 221, glutamate 389, and glutamate 393 each contribute to the Mg(2+) site. Serine 414 contributes to the substrate binding site.

The protein belongs to the ketol-acid reductoisomerase family. It depends on Mg(2+) as a cofactor.

It catalyses the reaction (2R)-2,3-dihydroxy-3-methylbutanoate + NADP(+) = (2S)-2-acetolactate + NADPH + H(+). The enzyme catalyses (2R,3R)-2,3-dihydroxy-3-methylpentanoate + NADP(+) = (S)-2-ethyl-2-hydroxy-3-oxobutanoate + NADPH + H(+). Its pathway is amino-acid biosynthesis; L-isoleucine biosynthesis; L-isoleucine from 2-oxobutanoate: step 2/4. It functions in the pathway amino-acid biosynthesis; L-valine biosynthesis; L-valine from pyruvate: step 2/4. Its function is as follows. Involved in the biosynthesis of branched-chain amino acids (BCAA). Catalyzes an alkyl-migration followed by a ketol-acid reduction of (S)-2-acetolactate (S2AL) to yield (R)-2,3-dihydroxy-isovalerate. In the isomerase reaction, S2AL is rearranged via a Mg-dependent methyl migration to produce 3-hydroxy-3-methyl-2-ketobutyrate (HMKB). In the reductase reaction, this 2-ketoacid undergoes a metal-dependent reduction by NADPH to yield (R)-2,3-dihydroxy-isovalerate. This Colwellia psychrerythraea (strain 34H / ATCC BAA-681) (Vibrio psychroerythus) protein is Ketol-acid reductoisomerase (NADP(+)).